A 198-amino-acid polypeptide reads, in one-letter code: ATP-dependent Clp protease proteolytic subunit (198 aa).

The active-site Nucleophile is S98. H123 is an active-site residue.

The protein belongs to the peptidase S14 family. Fourteen ClpP subunits assemble into 2 heptameric rings which stack back to back to give a disk-like structure with a central cavity, resembling the structure of eukaryotic proteasomes.

It is found in the cytoplasm. It carries out the reaction Hydrolysis of proteins to small peptides in the presence of ATP and magnesium. alpha-casein is the usual test substrate. In the absence of ATP, only oligopeptides shorter than five residues are hydrolyzed (such as succinyl-Leu-Tyr-|-NHMec, and Leu-Tyr-Leu-|-Tyr-Trp, in which cleavage of the -Tyr-|-Leu- and -Tyr-|-Trp bonds also occurs).. Cleaves peptides in various proteins in a process that requires ATP hydrolysis. Has a chymotrypsin-like activity. Plays a major role in the degradation of misfolded proteins. This Listeria innocua serovar 6a (strain ATCC BAA-680 / CLIP 11262) protein is ATP-dependent Clp protease proteolytic subunit.